Consider the following 659-residue polypeptide: MTKTRIRIVVCGDSGVGKTSLIACLVKDQFISWLQDVLPPITIPKDFSSSRYSPENTVVVDTGNSDLATLHKELKNADVIWLVYSDHDSYERIALYWMMMFRSLGVNLPVVLCRNKCDDEVEFLSSANIMDSDDDQLDNKIEDEEFIPILREFKEVETCIKASAKFKFNVNQAFYLCQRTITNPVAPLFDARIGELKPLGVLALKRVFVLSDMDQDGFLNDDEITKLQKKCFSKAVDVNELQFLKDTLTSISSPNQEYEDYILNVPGKGITKDGFLVLNKIYAEKGRHETTWGILRAFHYTDTLTINEKILRPKIDIPQSSSVELSPLGYRFFVDTFLKYDKDNDGGLNNDELHLLFKTTPGLPHLWIETNFPFLTVVNNSACITLQGWLALWSMTTFIDYSVTTEYLIYLGFDKDAKNALQITKPRRKRRRNGVYYRAPVFDRKVLNCYMLGKGNSGKSSLLESFLGRSFSEAYSPTIRPKISVNSLELKGGKQYYLILQELGEQETPILENKGKLDECDVLCLCYDSSDPESFSYIVSLIDKFDYLKELPIVFVALKADLDKQQQRCHIQPDDFADQLFIDHPLHISSTWPSSLNELFIKLTEVALEPITSTAGLGPAVLTNDIDYRQTIVAISSVVGFASLFTFTALKIYSSFKNT.

Residues 1–631 (MTKTRIRIVV…LTNDIDYRQT (631 aa)) are Cytoplasmic-facing. Residues 3-183 (KTRIRIVVCG…FYLCQRTITN (181 aa)) enclose the Miro 1 domain. Residues 12–19 (GDSGVGKT), 61–63 (DTG), and 115–118 (NKCD) contribute to the GTP site. 2 consecutive EF-hand domains span residues 199–234 (LGVLALKRVFVLSDMDQDGFLNDDEITKLQKKCFSK) and 328–363 (LGYRFFVDTFLKYDKDNDGGLNNDELHLLFKTTPGL). Residues Asp212, Asp214, Asp216, Glu223, Asp341, Asp343, Asp345, and Glu352 each coordinate Ca(2+). One can recognise a Miro 2 domain in the interval 444 to 609 (RKVLNCYMLG…FIKLTEVALE (166 aa)). GTP is bound by residues 453–460 (GKGNSGKS), 489–493 (ELKGG), and 558–561 (LKAD). The helical; Anchor for type IV membrane protein transmembrane segment at 632–652 (IVAISSVVGFASLFTFTALKI) threads the bilayer. Topologically, residues 653-659 (YSSFKNT) are mitochondrial intermembrane.

The protein belongs to the mitochondrial Rho GTPase family.

Its subcellular location is the mitochondrion outer membrane. Mitochondrial GTPase involved in mitochondrial trafficking. Probably involved in control of anterograde transport of mitochondria and their subcellular distribution. This Kluyveromyces lactis (strain ATCC 8585 / CBS 2359 / DSM 70799 / NBRC 1267 / NRRL Y-1140 / WM37) (Yeast) protein is Mitochondrial Rho GTPase 1 (GEM1).